The following is a 377-amino-acid chain: Flagellin C (377 aa).

2 coiled-coil regions span residues 103 to 129 and 301 to 340; these read SNSK…IAET and VDSH…KDTD.

The protein belongs to the bacterial flagellin family. Heteromer of multiple flagellin subunits including FlaA, FlaB, FlaC, FlaD and possibly FlaE.

It localises to the secreted. It is found in the bacterial flagellum. In terms of biological role, flagellin is the subunit protein which polymerizes to form the filaments of bacterial flagella. FlaC is not essential for flagellar synthesis and motility. This is Flagellin C (flaC) from Vibrio anguillarum (Listonella anguillarum).